We begin with the raw amino-acid sequence, 266 residues long: Exosome complex component Rrp42 (266 aa).

It belongs to the RNase PH family. Rrp42 subfamily. As to quaternary structure, component of the archaeal exosome complex. Forms a hexameric ring-like arrangement composed of 3 Rrp41-Rrp42 heterodimers. The hexameric ring associates with a trimer of Rrp4 and/or Csl4 subunits.

It is found in the cytoplasm. In terms of biological role, non-catalytic component of the exosome, which is a complex involved in RNA degradation. Contributes to the structuring of the Rrp41 active site. The sequence is that of Exosome complex component Rrp42 from Methanosarcina mazei (strain ATCC BAA-159 / DSM 3647 / Goe1 / Go1 / JCM 11833 / OCM 88) (Methanosarcina frisia).